Reading from the N-terminus, the 664-residue chain is Type IV inositol polyphosphate 5-phosphatase 3 (664 aa).

Positions 35-76 (GRDPEYGADTDNESENEDAREDNDDSSSDEEGGSGSRGRESK) are disordered. A compositionally biased stretch (acidic residues) spans 40–66 (YGADTDNESENEDAREDNDDSSSDEEG). Catalytic regions lie at residues 514 to 529 (ERIIWLGDLNYRLSSS) and 592 to 607 (PKRTPAWCDRVLSYGK).

This sequence belongs to the inositol polyphosphate 5-phosphatase family.

It catalyses the reaction a 1,2-diacyl-sn-glycero-3-phospho-(1D-myo-inositol-4,5-bisphosphate) + H2O = a 1,2-diacyl-sn-glycero-3-phospho-(1D-myo-inositol 4-phosphate) + phosphate. The catalysed reaction is a 1,2-diacyl-sn-glycero-3-phospho-(1D-myo-inositol-3,4,5-trisphosphate) + H2O = a 1,2-diacyl-sn-glycero-3-phospho-(1D-myo-inositol-3,4-bisphosphate) + phosphate. Functionally, has phosphatase activity toward PtdIns(4,5)P2 and PtdIns(3,4,5)P3. This Arabidopsis thaliana (Mouse-ear cress) protein is Type IV inositol polyphosphate 5-phosphatase 3.